A 631-amino-acid polypeptide reads, in one-letter code: Protein FRIABLE 1 (631 aa).

Positions 1-13 (MSVGVPVNPSSSS) are enriched in low complexity. Residues 1 to 36 (MSVGVPVNPSSSSQLPAAPTTTTRRRVADSQEDHSH) are disordered. Residues 1-120 (MSVGVPVNPS…NMRSTTNLGR (120 aa)) lie on the Cytoplasmic side of the membrane. Residues 26-36 (RVADSQEDHSH) show a composition bias toward basic and acidic residues. A helical; Signal-anchor for type II membrane protein membrane pass occupies residues 121–141 (FILTLLSILVVTFFLIVALSG). Topologically, residues 142–631 (GVGRRRKHVE…RPSLRAQSLR (490 aa)) are lumenal. N-linked (GlcNAc...) asparagine glycosylation is found at Asn-246, Asn-329, and Asn-364. 384 to 386 (HLR) is a binding site for substrate. Residues Asn-398 and Asn-425 are each glycosylated (N-linked (GlcNAc...) asparagine).

Belongs to the glycosyltransferase GT106 family. Ubiquitous. Strong expression in young seedlings, particularly at the junction between hypocotyl and root, in emerging cotyledons, and in parts of the roots. Also detected in the inflorescence (sepals, petals, mature pollen and siliques) and rosette leaves.

It localises to the golgi apparatus membrane. It participates in glycan metabolism. Functionally, glycosyltransferase required for normal cell adhesion and cell wall integrity. This is Protein FRIABLE 1 from Arabidopsis thaliana (Mouse-ear cress).